Consider the following 177-residue polypeptide: R-phycoerythrin beta chain (177 aa).

Positions 50 and 61 each coordinate phycourobilin. Residue asparagine 72 is modified to N4-methylasparagine. Residues cysteine 82 and cysteine 158 each coordinate (2R,3E)-phycoerythrobilin.

This sequence belongs to the phycobiliprotein family. In terms of assembly, heterodimer of an alpha and a beta chain. Post-translationally, contains two covalently linked phycoerythrobilin chromophores and one covalently linked phycourobilin chromophore.

Its subcellular location is the plastid. It localises to the chloroplast thylakoid membrane. Functionally, light-harvesting photosynthetic bile pigment-protein from the phycobiliprotein complex. The chain is R-phycoerythrin beta chain (cpeB) from Pyropia yezoensis (Susabi-nori).